A 129-amino-acid chain; its full sequence is Small ribosomal subunit protein uS11 (129 aa).

It belongs to the universal ribosomal protein uS11 family. Part of the 30S ribosomal subunit. Interacts with proteins S7 and S18. Binds to IF-3.

Its function is as follows. Located on the platform of the 30S subunit, it bridges several disparate RNA helices of the 16S rRNA. Forms part of the Shine-Dalgarno cleft in the 70S ribosome. The chain is Small ribosomal subunit protein uS11 from Sinorhizobium medicae (strain WSM419) (Ensifer medicae).